We begin with the raw amino-acid sequence, 551 residues long: Cleavage and polyadenylation specificity factor subunit 6 (551 aa).

The tract at residues 1–213 (MADGVDHIDI…RGRFPGAVPG (213 aa)) is necessary for interaction with NXF1. The RRM domain maps to 81 to 161 (IALYIGNLTW…QNPVVTPCNK (81 aa)). The interval 81–161 (IALYIGNLTW…QNPVVTPCNK (81 aa)) is necessary for interaction with NUDT21/CPSF5. The tract at residues 81-161 (IALYIGNLTW…QNPVVTPCNK (81 aa)) is necessary for nuclear paraspeckles localization. Residue T157 is modified to Phosphothreonine. The segment covering 169–180 (MQSRKTTQSGQM) has biased composition (polar residues). Disordered regions lie at residues 169–411 (MQSR…PLSE) and 477–551 (LHGI…YRHR). The short motif at 202 to 206 (RGRGR) is the GAR element. The segment covering 207-219 (FPGAVPGGDRFPG) has biased composition (low complexity). Pro residues-rich tracts occupy residues 220–265 (PAGP…PLAG), 285–366 (GQPP…PPPT), and 377–388 (GPPPTDPYGRPP). The tract at residues 358 to 551 (NPAFFPPPTN…RDREREYRHR (194 aa)) is (Microbial infection) Binds to HIV-1 capsid protein p24 (CA). Positions 389 to 404 (PYDRGDYGPPGREMDT) are enriched in basic and acidic residues. 2 positions are modified to phosphothreonine: T404 and T407. The interval 404-551 (TARTPLSEAE…RDREREYRHR (148 aa)) is sufficient for nuclear speckle localization. The segment at 405–551 (ARTPLSEAEF…RDREREYRHR (147 aa)) is necessary for RNA-binding. A necessary for interaction with SRSF3, SRSF7 and TRA2B/SFRS10 region spans residues 481–551 (ESKSYGSGSR…RDREREYRHR (71 aa)). A compositionally biased stretch (basic and acidic residues) spans 489–503 (SRRERSRERDHSRSR). Positions 490–551 (RRERSRERDH…RDREREYRHR (62 aa)) are arg/Ser-rich domain. A phosphoserine mark is found at S494, S500, S511, S513, and S525. The span at 504-514 (EKSRRHKSRSR) shows a compositional bias: basic residues. Residues 510–551 (KSRSRDRHDDYYRERSRERERHRDRDRDRDRERDREREYRHR) are sufficient for nuclear targeting. Residues 515–551 (DRHDDYYRERSRERERHRDRDRDRDRERDREREYRHR) show a composition bias toward basic and acidic residues.

Belongs to the RRM CPSF6/7 family. Component of the cleavage factor Im (CFIm) complex which is a heterotetramer composed of two subunits of NUDT21/CPSF5 and two subunits of CPSF6 or CPSF7 or a heterodimer of CPSF6 and CPSF7. The cleavage factor Im (CFIm) complex associates with the CPSF and CSTF complexes to promote the assembly of the core mRNA 3'-processing machinery. Associates with the exon junction complex (EJC). Associates with the 80S ribosome particle. Interacts (via the RRM domain) with NUDT21/CPSF5; this interaction is direct and enhances binding to RNA. Interacts (via Arg/Ser-rich domain) with FIP1L1 (preferentially via unphosphorylated form and Arg/Glu/Asp-rich domain); this interaction mediates, at least in part, the interaction between the CFIm and CPSF complexes and may be inhibited by CPSF6 hyper-phosphorylation. Interacts (via N-terminus) with NXF1; this interaction is direct. Interacts with SRSF3. Interacts with SRSF7. Interacts with SNRNP70. Interacts with TRA2B/SFRS10. Interacts with UPF1. Interacts with UPF3B. Interacts with VIRMA. Interacts (via Arg/Ser-rich domain) with TNPO3; promoting nuclear import of CPSF6 independently of its phosphorylation status. Interacts with YTHDC1. In terms of assembly, (Microbial infection) Interacts (via C-terminus) with HIV-1 capsid protein p24 (CA). Post-translationally, phosphorylated. Phosphorylated in the Arg/Ser-rich domain by SRPK1, in vitro. In terms of processing, symmetrically dimethylated on arginine residues in the GAR motif by PRMT5 in a WDR77- and CLNS1A-dependent manner. Asymmetrically dimethylated on arginine residues in the GAR motif by PRMT1.

The protein localises to the nucleus. It localises to the nucleoplasm. Its subcellular location is the nucleus speckle. The protein resides in the cytoplasm. Component of the cleavage factor Im (CFIm) complex that functions as an activator of the pre-mRNA 3'-end cleavage and polyadenylation processing required for the maturation of pre-mRNA into functional mRNAs. CFIm contributes to the recruitment of multiprotein complexes on specific sequences on the pre-mRNA 3'-end, so called cleavage and polyadenylation signals (pA signals). Most pre-mRNAs contain multiple pA signals, resulting in alternative cleavage and polyadenylation (APA) producing mRNAs with variable 3'-end formation. The CFIm complex acts as a key regulator of cleavage and polyadenylation site choice during APA through its binding to 5'-UGUA-3' elements localized in the 3'-untranslated region (UTR) for a huge number of pre-mRNAs. CPSF6 enhances NUDT21/CPSF5 binding to 5'-UGUA-3' elements localized upstream of pA signals and promotes RNA looping, and hence activates directly the mRNA 3'-processing machinery. Plays a role in mRNA export. In terms of biological role, (Microbial infection) Binds HIV-1 capsid-nucleocapsid (HIV-1 CA-NC) complexes and might thereby promote the integration of the virus in the nucleus of dividing cells (in vitro). The protein is Cleavage and polyadenylation specificity factor subunit 6 of Homo sapiens (Human).